Consider the following 91-residue polypeptide: ATP-dependent Clp protease adapter protein ClpS (91 aa).

The protein belongs to the ClpS family. Binds to the N-terminal domain of the chaperone ClpA.

Its function is as follows. Involved in the modulation of the specificity of the ClpAP-mediated ATP-dependent protein degradation. The protein is ATP-dependent Clp protease adapter protein ClpS of Helicobacter pylori (strain ATCC 700392 / 26695) (Campylobacter pylori).